Here is a 78-residue protein sequence, read N- to C-terminus: Putative protein PeaD (78 aa).

It belongs to the phage P protein family.

This Escherichia coli (strain K12) protein is Putative protein PeaD (peaD).